Reading from the N-terminus, the 603-residue chain is Cholinesterase (603 aa).

The first 29 residues, 1 to 29, serve as a signal peptide directing secretion; it reads MQTQHTKVTQTHFLLWILLLCMPFGKSHT. N-linked (GlcNAc...) asparagine glycosylation is present at asparagine 86. The cysteines at positions 94 and 121 are disulfide-linked. Asparagine 135 is a glycosylation site (N-linked (GlcNAc...) asparagine). Position 145–146 (145–146) interacts with substrate; that stretch reads GG. Serine 227 functions as the Acyl-ester intermediate in the catalytic mechanism. Serine 227 carries the phosphoserine modification. Asparagine 270 is a glycosylation site (N-linked (GlcNAc...) asparagine). Cysteine 281 and cysteine 292 are disulfide-bonded. The Charge relay system role is filled by glutamate 354. N-linked (GlcNAc...) asparagine glycosylation is present at asparagine 370. Cysteines 429 and 548 form a disulfide. Catalysis depends on histidine 467, which acts as the Charge relay system. N-linked (GlcNAc...) asparagine glycosylation is found at asparagine 484, asparagine 510, and asparagine 515.

This sequence belongs to the type-B carboxylesterase/lipase family. In terms of assembly, homotetramer; disulfide-linked. Dimer of dimers. As to expression, present in most cells except erythrocytes.

It localises to the secreted. The catalysed reaction is an acylcholine + H2O = a carboxylate + choline + H(+). Functionally, esterase with broad substrate specificity. Contributes to the inactivation of the neurotransmitter acetylcholine. Can degrade neurotoxic organophosphate esters. The polypeptide is Cholinesterase (Bche) (Mus musculus (Mouse)).